The sequence spans 512 residues: Sucrose transport protein SUC2 (512 aa).

Residues 1-31 are Cytoplasmic-facing; that stretch reads MVSHPMEKAANGASALETQTGELDQPERLRK. Residues 32–52 form a helical membrane-spanning segment; that stretch reads IISVSSIAAGVQFGWALQLSL. The Extracellular segment spans residues 53–65; the sequence is LTPYVQLLGIPHK. The chain crosses the membrane as a helical span at residues 66–86; sequence WASLIWLCGPISGMLVQPIVG. The Cytoplasmic portion of the chain corresponds to 87-100; the sequence is YHSDRCTSRFGRRR. A helical membrane pass occupies residues 101 to 121; sequence PFIVAGAGLVTVAVFLIGYAA. Residues 122-138 are Extracellular-facing; the sequence is DIGHSMGDQLDKPPKTR. The helical transmembrane segment at 139-159 threads the bilayer; that stretch reads AIAIFALGFWILDVANNTLQG. Residues 160–177 are Cytoplasmic-facing; it reads PCRAFLADLSAGNAKKTR. The chain crosses the membrane as a helical span at residues 178-198; it reads TANAFFSFFMAVGNVLGYAAG. The Extracellular portion of the chain corresponds to 199-223; the sequence is SYRNLYKVVPFTMTESCDLYCANLK. A helical membrane pass occupies residues 224 to 244; sequence TCFFLSITLLLIVTFVSLCYV. At 245 to 278 the chain is on the cytoplasmic side; it reads KEKPWTPEPTADGKASNVPFFGEIFGAFKELKRP. A helical transmembrane segment spans residues 279–299; sequence MWMLLIVTALNWIAWFPFLLF. Topologically, residues 300-332 are extracellular; sequence DTDWMGREVYGGNSDATATAASKKLYNDGVRAG. Residues 333–353 traverse the membrane as a helical segment; that stretch reads ALGLMLNAIVLGFMSLGVEWI. At 354-362 the chain is on the cytoplasmic side; the sequence is GRKLGGAKR. A helical membrane pass occupies residues 363-383; that stretch reads LWGIVNFILAICLAMTVVVTK. The Extracellular portion of the chain corresponds to 384–407; sequence QAENHRRDHGGAKTGPPGNVTAGA. Asparagine 402 carries an N-linked (GlcNAc...) asparagine glycan. The chain crosses the membrane as a helical span at residues 408–428; the sequence is LTLFAILGIPQAITFSIPFAL. Topologically, residues 429–440 are cytoplasmic; the sequence is ASIFSTNSGAGQ. Residues 441–461 form a helical membrane-spanning segment; sequence GLSLGVLNLAIVVPQMVISVG. Residues 462 to 473 lie on the Extracellular side of the membrane; sequence GGPFDELFGGGN. Residues 474 to 494 traverse the membrane as a helical segment; it reads IPAFVLGAIAAAVSGVLALTV. Residues 495 to 512 are Cytoplasmic-facing; sequence LPSPPPDAPAFKATMGFH.

The protein belongs to the glycoside-pentoside-hexuronide (GPH) cation symporter transporter (TC 2.A.2.4) family. In terms of assembly, homodimer. Interacts with SUC3 and SUC4. Expressed in leaves and, to a lower extent, in roots, flowers and stems. Highly specific to the phloem, exclusively localized in companion cells (at protein level).

The protein resides in the cell membrane. It catalyses the reaction sucrose(out) + H(+)(out) = sucrose(in) + H(+)(in). The protein operates within glycan biosynthesis; sucrose metabolism. Its activity is regulated as follows. Inhibited by protonophores (e.g. dinitrophenol and carbonyl cyanide m-chlorophenyl-hydrazone (CCCP)) and SH group inhibitors (e.g. N-ethylmaleimide (NEM) and p-chloromercuriphenyl sulphonic acid (PCMPS)). Functionally, responsible for the transport of sucrose into the cell, with the concomitant uptake of protons (symport system). Can also transport other glucosides such as maltose, arbutin (hydroquinone-beta-D-glucoside), salicin (2-(hydroxymethyl)phenyl-beta-D-glucoside), alpha-phenylglucoside, beta-phenylglucoside, alpha-paranitrophenylglucoside, beta-paranitrophenylglucoside, and paranitrophenyl-beta-thioglucoside. May also transport biotin. Required for apoplastic phloem sucrose loading in source tissues (e.g. leaves) in order to transport it to sink tissues (e.g. roots, flowers). The chain is Sucrose transport protein SUC2 from Arabidopsis thaliana (Mouse-ear cress).